Consider the following 241-residue polypeptide: ATP synthase subunit a (241 aa).

5 consecutive transmembrane segments (helical) span residues 30–50 (GQVFLTSWILLGALLVFISFG), 91–111 (FIGTLFLFVFVSNWGGALIPW), 128–148 (INTTIALALLVSLSYFYAGLS), 193–213 (LVVGVLVFLVPLILPIPVMFL), and 214–234 (GLFTSAIQALIFATLAAYYIG).

This sequence belongs to the ATPase A chain family. In terms of assembly, F-type ATPases have 2 components, CF(1) - the catalytic core - and CF(0) - the membrane proton channel. CF(1) has five subunits: alpha(3), beta(3), gamma(1), delta(1), epsilon(1). CF(0) has four main subunits: a, b, b' and c.

Its subcellular location is the cellular thylakoid membrane. In terms of biological role, key component of the proton channel; it plays a direct role in the translocation of protons across the membrane. The chain is ATP synthase subunit a from Prochlorococcus marinus (strain AS9601).